The following is a 343-amino-acid chain: Cytoplasmic tRNA 2-thiolation protein 1 (343 aa).

This sequence belongs to the TtcA family. CTU1/NCS6/ATPBD3 subfamily.

The protein resides in the cytoplasm. It functions in the pathway tRNA modification; 5-methoxycarbonylmethyl-2-thiouridine-tRNA biosynthesis. Plays a central role in 2-thiolation of mcm(5)S(2)U at tRNA wobble positions of tRNA(Lys), tRNA(Glu) and tRNA(Gln). Directly binds tRNAs and probably acts by catalyzing adenylation of tRNAs, an intermediate required for 2-thiolation. It is unclear whether it acts as a sulfurtransferase that transfers sulfur from thiocarboxylated URM1 onto the uridine of tRNAs at wobble position. The polypeptide is Cytoplasmic tRNA 2-thiolation protein 1 (Drosophila willistoni (Fruit fly)).